We begin with the raw amino-acid sequence, 231 residues long: ATP phosphoribosyltransferase (231 aa).

It belongs to the ATP phosphoribosyltransferase family. Short subfamily. In terms of assembly, heteromultimer composed of HisG and HisZ subunits.

Its subcellular location is the cytoplasm. The enzyme catalyses 1-(5-phospho-beta-D-ribosyl)-ATP + diphosphate = 5-phospho-alpha-D-ribose 1-diphosphate + ATP. The protein operates within amino-acid biosynthesis; L-histidine biosynthesis; L-histidine from 5-phospho-alpha-D-ribose 1-diphosphate: step 1/9. Functionally, catalyzes the condensation of ATP and 5-phosphoribose 1-diphosphate to form N'-(5'-phosphoribosyl)-ATP (PR-ATP). Has a crucial role in the pathway because the rate of histidine biosynthesis seems to be controlled primarily by regulation of HisG enzymatic activity. The protein is ATP phosphoribosyltransferase of Psychrobacter arcticus (strain DSM 17307 / VKM B-2377 / 273-4).